The chain runs to 302 residues: tRNA pseudouridine synthase B (302 aa).

Asp48 serves as the catalytic Nucleophile.

This sequence belongs to the pseudouridine synthase TruB family. Type 1 subfamily.

It catalyses the reaction uridine(55) in tRNA = pseudouridine(55) in tRNA. Functionally, responsible for synthesis of pseudouridine from uracil-55 in the psi GC loop of transfer RNAs. This is tRNA pseudouridine synthase B from Xylella fastidiosa (strain Temecula1 / ATCC 700964).